Reading from the N-terminus, the 288-residue chain is Homoserine kinase (288 aa).

Position 78 to 88 (78 to 88 (PLARGLGSSSS)) interacts with ATP.

This sequence belongs to the GHMP kinase family. Homoserine kinase subfamily.

It is found in the cytoplasm. It carries out the reaction L-homoserine + ATP = O-phospho-L-homoserine + ADP + H(+). Its pathway is amino-acid biosynthesis; L-threonine biosynthesis; L-threonine from L-aspartate: step 4/5. Functionally, catalyzes the ATP-dependent phosphorylation of L-homoserine to L-homoserine phosphate. In Streptococcus mutans serotype c (strain ATCC 700610 / UA159), this protein is Homoserine kinase.